The sequence spans 249 residues: Probable septum site-determining protein MinC (249 aa).

The interval 117–138 (AVRPPQPPPPPHARAEPAAPVA) is disordered.

The protein belongs to the MinC family. As to quaternary structure, interacts with MinD and FtsZ.

Functionally, cell division inhibitor that blocks the formation of polar Z ring septums. Rapidly oscillates between the poles of the cell to destabilize FtsZ filaments that have formed before they mature into polar Z rings. Prevents FtsZ polymerization. This is Probable septum site-determining protein MinC from Xanthomonas campestris pv. campestris (strain 8004).